A 277-amino-acid polypeptide reads, in one-letter code: 4-hydroxy-tetrahydrodipicolinate reductase (277 aa).

Residues 11–16 (GALGRM) and 110–112 (GTT) each bind NAD(+). The active-site Proton donor/acceptor is the His166. Position 167 (His167) interacts with (S)-2,3,4,5-tetrahydrodipicolinate. Lys170 (proton donor) is an active-site residue. 176–177 (GT) is a binding site for (S)-2,3,4,5-tetrahydrodipicolinate.

It belongs to the DapB family.

It localises to the cytoplasm. The enzyme catalyses (S)-2,3,4,5-tetrahydrodipicolinate + NAD(+) + H2O = (2S,4S)-4-hydroxy-2,3,4,5-tetrahydrodipicolinate + NADH + H(+). It catalyses the reaction (S)-2,3,4,5-tetrahydrodipicolinate + NADP(+) + H2O = (2S,4S)-4-hydroxy-2,3,4,5-tetrahydrodipicolinate + NADPH + H(+). It functions in the pathway amino-acid biosynthesis; L-lysine biosynthesis via DAP pathway; (S)-tetrahydrodipicolinate from L-aspartate: step 4/4. Its function is as follows. Catalyzes the conversion of 4-hydroxy-tetrahydrodipicolinate (HTPA) to tetrahydrodipicolinate. The polypeptide is 4-hydroxy-tetrahydrodipicolinate reductase (Parasynechococcus marenigrum (strain WH8102)).